The following is a 546-amino-acid chain: uncharacterized protein (546 aa).

Residues 52 to 123 form the SLH domain; the sequence is SVAELRDVQP…NTIEQLLQEN (72 aa).

This sequence belongs to the OprB family.

This is an uncharacterized protein from Synechocystis sp. (strain ATCC 27184 / PCC 6803 / Kazusa).